The sequence spans 224 residues: UPF0758 protein NE1464 (224 aa).

Residues 102–224 enclose the MPN domain; the sequence is IMDSPQSVRN…VVSFAERGLI (123 aa). Histidine 173, histidine 175, and aspartate 186 together coordinate Zn(2+). Positions 173 to 186 match the JAMM motif motif; the sequence is HNHPSGIAEPSTAD.

It belongs to the UPF0758 family.

The chain is UPF0758 protein NE1464 from Nitrosomonas europaea (strain ATCC 19718 / CIP 103999 / KCTC 2705 / NBRC 14298).